A 90-amino-acid polypeptide reads, in one-letter code: MALDSAKKAQIVAKFARKEGDTGSPEVQIALLTARITELTEHLKIFKKDFSSRLGLLKLVGQRKRLLKYLKNKDYTTYSKLISELGLRDK.

Belongs to the universal ribosomal protein uS15 family. Part of the 30S ribosomal subunit. Forms a bridge to the 50S subunit in the 70S ribosome, contacting the 23S rRNA.

Its function is as follows. One of the primary rRNA binding proteins, it binds directly to 16S rRNA where it helps nucleate assembly of the platform of the 30S subunit by binding and bridging several RNA helices of the 16S rRNA. Forms an intersubunit bridge (bridge B4) with the 23S rRNA of the 50S subunit in the ribosome. The polypeptide is Small ribosomal subunit protein uS15 (Campylobacter concisus (strain 13826)).